A 251-amino-acid polypeptide reads, in one-letter code: Flap endonuclease Xni (251 aa).

Asp104 lines the Mg(2+) pocket. Positions 160–249 (VSPGQLADFW…LDGNLQQLRL (90 aa)) constitute a 5'-3' exonuclease domain. 5 residues coordinate K(+): Leu171, Ala172, Pro180, Val182, and Ile185. The interaction with DNA stretch occupies residues 184–189 (GIGPKS).

The protein belongs to the Xni family. The cofactor is Mg(2+). K(+) is required as a cofactor.

Functionally, has flap endonuclease activity. During DNA replication, flap endonucleases cleave the 5'-overhanging flap structure that is generated by displacement synthesis when DNA polymerase encounters the 5'-end of a downstream Okazaki fragment. The polypeptide is Flap endonuclease Xni (Cronobacter sakazakii (strain ATCC BAA-894) (Enterobacter sakazakii)).